Reading from the N-terminus, the 297-residue chain is Magnetosome protein MamB (297 aa).

Topologically, residues 1 to 12 (MKFENCRDCREE) are cytoplasmic. The segment at 1-214 (MKFENCRDCR…GLMDSSVDTE (214 aa)) is transmembrane domain (TMD). Residues 13–33 (VVWWAFTADICMTLFKGILGL) form a helical membrane-spanning segment. The Lumenal portion of the chain corresponds to 34-83 (MSGSVALVADSLHSGADVVASGVTQLSLKISNKPADERYPFGYGNIQYIS). The chain crosses the membrane as a helical span at residues 84-104 (SAIVGSLLLIGASFLMYGSVV). Topologically, residues 105–112 (KLISGTYE) are cytoplasmic. The helical transmembrane segment at 113–133 (APSIFAALGASVTVIVNELMY) threads the bilayer. At 134–164 (RYQICVGNENNSPAIIANAWDNRSDAISSAA) the chain is on the lumenal side. A helical membrane pass occupies residues 165-185 (VMVGVIASVIGFPIADTIAAI). Residues 186–297 (GVSALVGHIG…PAPAAVTVRV (112 aa)) are Cytoplasmic-facing. Positions 215–297 (LLQTAWQIAT…PAPAAVTVRV (83 aa)) are C-terminal domain (CTD).

The protein belongs to the cation diffusion facilitator (CDF) transporter (TC 2.A.4) family. In terms of assembly, forms homodimers via its C-terminal domain, may form higher order multimers that are sensitive to reducing agent. Probably interacts with MamE. Interacts with MamM via their C-terminal domains.

Its subcellular location is the cell inner membrane. It is found in the magnetosome membrane. Functionally, plays a dual, essential role in magnetosome formation; required for magnetosome vesicle formation as well as biomineralization. Requires heterodimerization with MamM for stability. Probably binds and transports iron. One of 7 genes (mamLQBIEMO) able to induce magnetosome membrane biogenesis; coexpression of mamLQRBIEMO in a deletion of the 17 gene mamAB operon restores magnetosome vesicle formation but not magnetite biosynthesis. This chain is Magnetosome protein MamB, found in Magnetospirillum gryphiswaldense (strain DSM 6361 / JCM 21280 / NBRC 15271 / MSR-1).